The following is a 303-amino-acid chain: Putative ankyrin repeat protein R601 (303 aa).

4 ANK repeats span residues 86–115 (DDNM…DVTV), 117–146 (NNFA…DITV), 147–176 (DNYF…NVDS), and 200–233 (NADV…DVSY).

In Acanthamoeba polyphaga (Amoeba), this protein is Putative ankyrin repeat protein R601.